Reading from the N-terminus, the 738-residue chain is uncharacterized protein (738 aa).

Residues 1–10 (MQKKVVQSAS) are compositionally biased toward polar residues. 3 disordered regions span residues 1–23 (MQKKVVQSASKNEELDPHYKRSS), 53–83 (EGTHSASVHPSTSSTSHISSPSAFSVQNPNP), and 219–266 (HQDG…PLST). The segment covering 55-77 (THSASVHPSTSSTSHISSPSAFS) has biased composition (low complexity). A compositionally biased stretch (polar residues) spans 246–266 (GSPSPNRSLNVSNNTTPPLST). Phosphothreonine is present on residues T260 and T261. The zn(2)-C6 fungal-type DNA-binding region spans 292–318 (CAKCQKDNKKCDDARPCQRCIKAKTDC). Over residues 323-335 (RKKRPTGVRRGPY) the composition is skewed to basic residues. Disordered regions lie at residues 323-372 (RKKR…SDNQ) and 441-464 (DETGTSSAGSKPFNRKSRNRSFTN). Over residues 340 to 352 (DTSNNTKSTTASS) the composition is skewed to low complexity. Over residues 353–372 (GHSTQDSLSSKMLDPSSDNQ) the composition is skewed to polar residues.

The protein resides in the cytoplasm. It is found in the nucleus. This is an uncharacterized protein from Schizosaccharomyces pombe (strain 972 / ATCC 24843) (Fission yeast).